A 467-amino-acid polypeptide reads, in one-letter code: ATP synthase subunit beta (467 aa).

154 to 161 (GGAGVGKT) contributes to the ATP binding site.

This sequence belongs to the ATPase alpha/beta chains family. As to quaternary structure, F-type ATPases have 2 components, CF(1) - the catalytic core - and CF(0) - the membrane proton channel. CF(1) has five subunits: alpha(3), beta(3), gamma(1), delta(1), epsilon(1). CF(0) has three main subunits: a(1), b(2) and c(9-12). The alpha and beta chains form an alternating ring which encloses part of the gamma chain. CF(1) is attached to CF(0) by a central stalk formed by the gamma and epsilon chains, while a peripheral stalk is formed by the delta and b chains.

It is found in the cell inner membrane. It carries out the reaction ATP + H2O + 4 H(+)(in) = ADP + phosphate + 5 H(+)(out). Its function is as follows. Produces ATP from ADP in the presence of a proton gradient across the membrane. The catalytic sites are hosted primarily by the beta subunits. The protein is ATP synthase subunit beta of Leptospira interrogans serogroup Icterohaemorrhagiae serovar copenhageni (strain Fiocruz L1-130).